Reading from the N-terminus, the 429-residue chain is Chaperone SurA (429 aa).

A signal peptide spans 1–18; that stretch reads MFKRIALVCALFSGVCFA. PpiC domains follow at residues 170–271 and 281–380; these read NLTY…KLVA and ITQT…EVIA.

The protein resides in the periplasm. The catalysed reaction is [protein]-peptidylproline (omega=180) = [protein]-peptidylproline (omega=0). In terms of biological role, chaperone involved in the correct folding and assembly of outer membrane proteins. Recognizes specific patterns of aromatic residues and the orientation of their side chains, which are found more frequently in integral outer membrane proteins. May act in both early periplasmic and late outer membrane-associated steps of protein maturation. This Legionella pneumophila subsp. pneumophila (strain Philadelphia 1 / ATCC 33152 / DSM 7513) protein is Chaperone SurA.